The chain runs to 93 residues: Acylphosphatase (93 aa).

In terms of domain architecture, Acylphosphatase-like spans 5 to 93 (CIIAWVHGRV…EELTGFRIRY (89 aa)). Active-site residues include Arg20 and Asn38.

The protein belongs to the acylphosphatase family.

It catalyses the reaction an acyl phosphate + H2O = a carboxylate + phosphate + H(+). This chain is Acylphosphatase (acyP), found in Citrobacter koseri (strain ATCC BAA-895 / CDC 4225-83 / SGSC4696).